The following is a 547-amino-acid chain: Chaperonin GroEL (547 aa).

ATP is bound by residues 30-33 (TLGP), lysine 51, 87-91 (DGTTT), glycine 415, and aspartate 496.

This sequence belongs to the chaperonin (HSP60) family. As to quaternary structure, forms a cylinder of 14 subunits composed of two heptameric rings stacked back-to-back. Interacts with the co-chaperonin GroES.

The protein resides in the cytoplasm. It carries out the reaction ATP + H2O + a folded polypeptide = ADP + phosphate + an unfolded polypeptide.. In terms of biological role, together with its co-chaperonin GroES, plays an essential role in assisting protein folding. The GroEL-GroES system forms a nano-cage that allows encapsulation of the non-native substrate proteins and provides a physical environment optimized to promote and accelerate protein folding. This chain is Chaperonin GroEL, found in Actinobacillus pleuropneumoniae serotype 5b (strain L20).